The sequence spans 59 residues: Large ribosomal subunit protein bL32c (59 aa).

The interval 37 to 59 (SRSFSSGNEHPKPKGFSGQQTNK) is disordered.

The protein belongs to the bacterial ribosomal protein bL32 family.

It is found in the plastid. The protein resides in the chloroplast. This chain is Large ribosomal subunit protein bL32c, found in Hordeum vulgare (Barley).